Reading from the N-terminus, the 139-residue chain is Large ribosomal subunit protein bL17 (139 aa).

It belongs to the bacterial ribosomal protein bL17 family. Part of the 50S ribosomal subunit. Contacts protein L32.

The sequence is that of Large ribosomal subunit protein bL17 from Sphingopyxis alaskensis (strain DSM 13593 / LMG 18877 / RB2256) (Sphingomonas alaskensis).